We begin with the raw amino-acid sequence, 177 residues long: Large ribosomal subunit protein uL6 (177 aa).

Belongs to the universal ribosomal protein uL6 family. In terms of assembly, part of the 50S ribosomal subunit.

Its function is as follows. This protein binds to the 23S rRNA, and is important in its secondary structure. It is located near the subunit interface in the base of the L7/L12 stalk, and near the tRNA binding site of the peptidyltransferase center. The polypeptide is Large ribosomal subunit protein uL6 (Paramagnetospirillum magneticum (strain ATCC 700264 / AMB-1) (Magnetospirillum magneticum)).